Here is a 341-residue protein sequence, read N- to C-terminus: Muscleblind-like protein 1 (341 aa).

Position 6 is a phosphothreonine (Thr6). C3H1-type zinc fingers lie at residues 13–41 (WLTLEVCREFQRGTCSRPDTECKFAHPSK), 47–73 (NGRVIACFDSLKGRCSRENCKYLHPPP), 178–206 (TDRLEVCREYQRGNCNRGENDCRFAHPAD), and 214–240 (DNTVTVCMDYIKGRCSREKCKYFHPPA).

Belongs to the muscleblind family. As to quaternary structure, interacts with DDX1 and YBX1. Interacts with HNRNPH1; the interaction in RNA-independent. Interacts with RBPMS; the interaction allows cooperative assembly of RNA-bound stable cell-specific alternative splicing regulatory complexes. Highly expressed in cardiac and skeletal muscle. Weakly expressed in heart and eye (at protein level).

It is found in the nucleus. Its subcellular location is the cytoplasm. The protein localises to the cytoplasmic granule. Functionally, mediates pre-mRNA alternative splicing regulation. Acts either as activator or repressor of splicing on specific pre-mRNA targets. Inhibits cardiac troponin-T (TNNT2) pre-mRNA exon inclusion but induces insulin receptor (IR) pre-mRNA exon inclusion in muscle. Antagonizes the alternative splicing activity pattern of CELF proteins. Regulates the TNNT2 exon 5 skipping through competition with U2AF2. Inhibits the formation of the spliceosome A complex on intron 4 of TNNT2 pre-mRNA. Binds to the stem-loop structure within the polypyrimidine tract of TNNT2 intron 4 during spliceosome assembly. Binds to the 5'-YGCU(U/G)Y-3'consensus sequence. Binds to the IR RNA. Binds to CUG triplet repeat expansion in myotonic dystrophy muscle cells by sequestering the target RNAs. Together with RNA binding proteins RBPMS and RBFOX2, activates vascular smooth muscle cells alternative splicing events. Regulates NCOR2 alternative splicing. This chain is Muscleblind-like protein 1 (Mbnl1), found in Mus musculus (Mouse).